The primary structure comprises 115 residues: U3-lycotoxin-Ls1o (115 aa).

Residues 1–20 (MKFVLLFGVLLVTLFSYSSA) form the signal peptide. Positions 21-44 (EMLDDFDQADEDELLSLIEKEEAR) are excised as a propeptide. Intrachain disulfides connect Cys48/Cys63, Cys55/Cys72, Cys62/Cys87, and Cys74/Cys85.

This sequence belongs to the neurotoxin 19 (CSTX) family. 01 subfamily. Expressed by the venom gland.

The protein resides in the secreted. The sequence is that of U3-lycotoxin-Ls1o from Lycosa singoriensis (Wolf spider).